A 301-amino-acid polypeptide reads, in one-letter code: Putative S-adenosyl-L-methionine-dependent methyltransferase MUL_0450 (301 aa).

Residues aspartate 127 and 156 to 157 (DL) each bind S-adenosyl-L-methionine.

It belongs to the UPF0677 family.

Exhibits S-adenosyl-L-methionine-dependent methyltransferase activity. This is Putative S-adenosyl-L-methionine-dependent methyltransferase MUL_0450 from Mycobacterium ulcerans (strain Agy99).